Here is a 349-residue protein sequence, read N- to C-terminus: Pinopsin (349 aa).

Over residues 1–16 (MDPTNSPQEPPHTSTP) the composition is skewed to polar residues. Residues 1–22 (MDPTNSPQEPPHTSTPGPFDGP) form a disordered region. Residues 1–32 (MDPTNSPQEPPHTSTPGPFDGPQWPHQAPRGM) are Extracellular-facing. Residues 33 to 57 (YLSVAVLMGIVVISASVVNGLVIVV) form a helical membrane-spanning segment. The Cytoplasmic portion of the chain corresponds to 58 to 69 (SIRYKKLRSPLN). The chain crosses the membrane as a helical span at residues 70 to 94 (YILVNLAMADLLVTLCGSSVSFSNN). The Extracellular portion of the chain corresponds to 95–109 (INGFFVFGKRLCELE). A disulfide bridge links cysteine 106 with cysteine 183. Residues 110–129 (GFMVSLTGIVGLWSLAILAL) traverse the membrane as a helical segment. The Cytoplasmic segment spans residues 130 to 148 (ERYVVVCRPLGDFRFQHRH). A helical membrane pass occupies residues 149-172 (AVTGCAFTWVWSLLWTTPPLLGWS). Over 173-196 (SYVPEGLRTSCGPNWYTGGSNNNS) the chain is Extracellular. The N-linked (GlcNAc...) asparagine glycan is linked to asparagine 194. A helical membrane pass occupies residues 197–224 (YILTLFVTCFVMPLSLILFSYANLLMTL). The Cytoplasmic segment spans residues 225 to 246 (RAAAAQQQESDTTQQAERQVTR). Residues 247–270 (MVVAMVMAFLICWLPYTTFALVVA) traverse the membrane as a helical segment. Over 271 to 278 (TNKDIAIQ) the chain is Extracellular. A helical membrane pass occupies residues 279–303 (PALASLPSYFSKTATVYNPIIYVFM). Lysine 290 carries the N6-(retinylidene)lysine modification. The Cytoplasmic portion of the chain corresponds to 304–349 (NKQFQSCLLKMLCCGHHPRGTGRTAPAAPASPTDGLRNKVTPSHPV). 2 S-palmitoyl cysteine lipidation sites follow: cysteine 316 and cysteine 317. The tract at residues 325 to 349 (GRTAPAAPASPTDGLRNKVTPSHPV) is disordered.

The protein belongs to the G-protein coupled receptor 1 family. Opsin subfamily. In terms of processing, phosphorylated on some or all of the serine and threonine residues present in the C-terminal region. As to expression, pineal gland.

The protein resides in the membrane. In terms of biological role, produces a slow and prolonged phototransduction response consistent with the non-visual function of pineal photoreception. The chain is Pinopsin from Columba livia (Rock dove).